A 206-amino-acid polypeptide reads, in one-letter code: LexA repressor (206 aa).

A DNA-binding region (H-T-H motif) is located at residues 28–48; the sequence is RAEIATRLGFKSANAAEEHLK. Residues Ser-123 and Lys-160 each act as for autocatalytic cleavage activity in the active site.

The protein belongs to the peptidase S24 family. Homodimer.

The enzyme catalyses Hydrolysis of Ala-|-Gly bond in repressor LexA.. Its function is as follows. Represses a number of genes involved in the response to DNA damage (SOS response), including recA and lexA. In the presence of single-stranded DNA, RecA interacts with LexA causing an autocatalytic cleavage which disrupts the DNA-binding part of LexA, leading to derepression of the SOS regulon and eventually DNA repair. This chain is LexA repressor, found in Shewanella putrefaciens (strain CN-32 / ATCC BAA-453).